Consider the following 117-residue polypeptide: Large ribosomal subunit protein uL18 (117 aa).

This sequence belongs to the universal ribosomal protein uL18 family. In terms of assembly, part of the 50S ribosomal subunit; part of the 5S rRNA/L5/L18/L25 subcomplex. Contacts the 5S and 23S rRNAs.

Functionally, this is one of the proteins that bind and probably mediate the attachment of the 5S RNA into the large ribosomal subunit, where it forms part of the central protuberance. This Buchnera aphidicola subsp. Acyrthosiphon kondoi (Acyrthosiphon kondoi symbiotic bacterium) protein is Large ribosomal subunit protein uL18.